The chain runs to 431 residues: Large envelope protein (431 aa).

A lipid anchor (N-myristoyl glycine; by host) is attached at glycine 2. The segment at 2–148 (GNNIKVTFNP…PPLRDTHPHL (147 aa)) is pre-S1. The tract at residues 2 to 207 (GNNIKVTFNP…PSTTGDPALS (206 aa)) is pre-S. The Virion surface; in external conformation segment spans residues 2–214 (GNNIKVTFNP…ALSPEMSPSS (213 aa)). The Intravirion; in internal conformation segment spans residues 2–286 (GNNIKVTFNP…NGFRWMYLRR (285 aa)). An N-linked (GlcNAc...) asparagine glycan is attached at asparagine 3. The interval 115 to 147 (IPRGLVPPQTPTNRDQGRKPTPPTPPLRDTHPH) is disordered. The segment at 149–207 (TMKNQTFHLQGFVDGLRDLTTTERQHNAYRDPFTTLSPAVPTVSTILSPPSTTGDPALS) is pre-S2. Residues 215–235 (LLGLLAGLQVVYFLWTKILTI) form a helical membrane-spanning segment. Residues 236–286 (AQNLDWWCTSLSFPGGIPECTGQNSQFQTCKHLPTSCPPTCNGFRWMYLRR) lie on the Intravirion; in external conformation side of the membrane. The helical transmembrane segment at 287–307 (FIIYLLVLLLCLIFLLVLLDW) threads the bilayer. The Virion surface segment spans residues 308–379 (KGLIPVCPLQ…WALARLSWLN (72 aa)). A glycan (N-linked (GlcNAc...) asparagine; by host) is linked at asparagine 351. Residues 380-400 (LLVPLLQWLGGISLIAWFLLI) form a helical membrane-spanning segment. The Intravirion segment spans residues 401–406 (WMIWFW). Residues 407 to 429 (GPALLSILPPFIPIFVLFFLIWV) form a helical membrane-spanning segment. The Virion surface portion of the chain corresponds to 430–431 (YI).

Belongs to the orthohepadnavirus major surface antigen family. As to quaternary structure, in its internal form (Li-HBsAg), interacts with the capsid protein and with the isoform S. Interacts with host chaperone CANX. In terms of assembly, associates with host chaperone CANX through its pre-S2 N glycan; this association may be essential for isoform M proper secretion. Interacts with isoform L. Interacts with the antigens of satellite virus HDV (HDVAgs); this interaction is required for encapsidation of HDV genomic RNA. In terms of processing, isoform M is N-terminally acetylated by host at a ratio of 90%, and N-glycosylated by host at the pre-S2 region. Myristoylated.

It is found in the virion membrane. Functionally, the large envelope protein exists in two topological conformations, one which is termed 'external' or Le-HBsAg and the other 'internal' or Li-HBsAg. In its external conformation the protein attaches the virus to cell receptors and thereby initiating infection. This interaction determines the species specificity and liver tropism. This attachment induces virion internalization predominantly through caveolin-mediated endocytosis. The large envelope protein also assures fusion between virion membrane and endosomal membrane. In its internal conformation the protein plays a role in virion morphogenesis and mediates the contact with the nucleocapsid like a matrix protein. Its function is as follows. The middle envelope protein plays an important role in the budding of the virion. It is involved in the induction of budding in a nucleocapsid independent way. In this process the majority of envelope proteins bud to form subviral lipoprotein particles of 22 nm of diameter that do not contain a nucleocapsid. The protein is Large envelope protein of Marmota monax (Woodchuck).